A 493-amino-acid polypeptide reads, in one-letter code: Glycerol kinase (493 aa).

T11 lines the ADP pocket. The ATP site is built by T11, T12, and S13. T11 contributes to the sn-glycerol 3-phosphate binding site. Residue R15 participates in ADP binding. The sn-glycerol 3-phosphate site is built by R80, E81, Y132, and D241. R80, E81, Y132, D241, and Q242 together coordinate glycerol. ADP contacts are provided by T263 and G306. ATP is bound by residues T263, G306, Q310, and G408. G408 is a binding site for ADP.

Belongs to the FGGY kinase family.

The enzyme catalyses glycerol + ATP = sn-glycerol 3-phosphate + ADP + H(+). It participates in polyol metabolism; glycerol degradation via glycerol kinase pathway; sn-glycerol 3-phosphate from glycerol: step 1/1. With respect to regulation, inhibited by fructose 1,6-bisphosphate (FBP). Key enzyme in the regulation of glycerol uptake and metabolism. Catalyzes the phosphorylation of glycerol to yield sn-glycerol 3-phosphate. In Cereibacter sphaeroides (strain ATCC 17025 / ATH 2.4.3) (Rhodobacter sphaeroides), this protein is Glycerol kinase.